A 143-amino-acid chain; its full sequence is Transcriptional regulator SlyA (143 aa).

The region spanning 2-135 (ESTLGSDLAR…LSGLIDKLEK (134 aa)) is the HTH marR-type domain. The H-T-H motif DNA-binding region spans 49–72 (QIQLAKAIGIEQPSLVRTLDQLEE).

The protein belongs to the SlyA family. As to quaternary structure, homodimer.

Functionally, transcription regulator that can specifically activate or repress expression of target genes. The polypeptide is Transcriptional regulator SlyA (Yersinia pestis bv. Antiqua (strain Antiqua)).